We begin with the raw amino-acid sequence, 462 residues long: Retinoic acid receptor alpha (462 aa).

Residues 1–87 (MASNSSSCPT…PPPLPRIYKP (87 aa)) are modulating. A compositionally biased stretch (polar residues) spans 52–64 (GYSTPSPATIETQ). Residues 52-77 (GYSTPSPATIETQSSSSEEIVPSPPS) are disordered. The residue at position 77 (S77) is a Phosphoserine; by CDK7. 2 NR C4-type zinc fingers span residues 88–108 (CFVCQDKSSGYHYGVSACEGC) and 124–148 (CHRDKNCIINKVTRNRCQYCRLQKC). A DNA-binding region (nuclear receptor) is located at residues 88–153 (CFVCQDKSSG…RLQKCFDVGM (66 aa)). S96 is modified (phosphoserine; by PKB/AKT1). The hinge stretch occupies residues 154–182 (SKESVRNDRNKKKKEAPKPECSESYTLTP). Residues K166 and K171 each participate in a glycyl lysine isopeptide (Lys-Gly) (interchain with G-Cter in SUMO) cross-link. One can recognise an NR LBD domain in the interval 183–417 (EVGELIEKVR…PLIQEMLENS (235 aa)). S219 bears the Phosphoserine; by PKA mark. All-trans-retinoate is bound at residue C235. The short motif at 254 to 258 (IADQI) is the UBR5-degron element. Residue S287 coordinates all-trans-retinoate. N6,N6,N6-trimethyllysine is present on K347. At S369 the chain carries Phosphoserine; by PKA and RPS6KA5. K399 is covalently cross-linked (Glycyl lysine isopeptide (Lys-Gly) (interchain with G-Cter in SUMO)). The tract at residues 404 to 419 (GSMPPLIQEMLENSEG) is required for binding corepressor NCOR1. Positions 408-416 (PLIQEMLEN) match the 9aaTAD motif. The interval 420 to 462 (LDTLSGQSGGGTRDGGGLAPPPGSCSPSLSPSSHRSSPATQSP) is disordered. A compositionally biased stretch (gly residues) spans 426-437 (QSGGGTRDGGGL). Over residues 444–462 (CSPSLSPSSHRSSPATQSP) the composition is skewed to low complexity.

It belongs to the nuclear hormone receptor family. NR1 subfamily. In terms of assembly, heterodimer; with RXRA. Binds DNA preferentially as a heterodimer. RXRA serves as enhancer to induce RARA binding to RARE. Interacts with RXRG. Interacts with NCOA3 and NCOA6 coactivators, leading to a strong increase of transcription of target genes. Interacts with NCOA7; the interaction requires ligand-binding. Interacts (via the ligand-binding domain) with PRAME; interaction is direct and ligand (retinoic acid)-dependent. Interacts with PRKAR1A; the interaction negatively regulates RARA transcriptional activity. Interacts with NCOR1; the interaction occurs in the absence of ligand and represses transcriptional activity. Interacts with NCOR2. Interacts with PRMT2. Interacts with LRIF1. Interacts with ASXL1 and NCOA1. Interacts with ACTN4. Interacts with CDK7; the interaction is enhanced by interaction with GTF2H3. Interacts with GTF2H3; the interaction requires prior phosphorylation on Ser-369 which then enhances interaction with CDK7. In a complex with HDAC3, HDAC5 and HDAC7; the HDACs serve as corepressors of RARA, causing its deacetylation and inhibition of RARE DNA element binding; association with HDAC3, HDAC5 and HDAC7 is increased upon oscillatory shear stress. In the absence of hormonal ligand, interacts with TACC1. Phosphorylated on serine and threonine residues. Phosphorylation does not change during cell cycle. Phosphorylation on Ser-77 is crucial for the N-terminal AF1 transcriptional activity. Under stress conditions, MAPK8 enhances phosphorylation on Thr-181, Ser-445 and Ser-461 leading to RARA ubiquitination and degradation. Phosphorylation by AKT1 inhibits the transactivation activity. On retinoic acid stimulation, phosphorylation on Ser-369 by RPS6KA5 promotes interaction with GTF2H3 and the CDK7-mediated phosphorylation of Ser-77. In terms of processing, ubiquitinated by UBR5, leading to its degradation: UBR5 specifically recognizes and binds ligand-bound RARA when it is not associated with coactivators (NCOAs). In presence of NCOAs, the UBR5-degron is not accessible, preventing its ubiquitination and degradation. Post-translationally, sumoylated with SUMO2, mainly on Lys-399 which is also required for SENP6 binding. On all-trans retinoic acid (ATRA) binding, a conformational change may occur that allows sumoylation on two additional site, Lys-166 and Lys-171. Probably desumoylated by SENP6. Sumoylation levels determine nuclear localization and regulate ATRA-mediated transcriptional activity. Acetylated; acetylation is increased upon pulsatile shear stress and decreased upon oscillatory shear stress. Expressed in Sertoli cells and germ cells.

The protein localises to the nucleus. It localises to the cytoplasm. In terms of biological role, receptor for retinoic acid. Retinoic acid receptors bind as heterodimers to their target response elements in response to their ligands, all-trans or 9-cis retinoic acid, and regulate gene expression in various biological processes. The RXR/RAR heterodimers bind to the retinoic acid response elements (RARE) composed of tandem 5'-AGGTCA-3' sites known as DR1-DR5. In the absence of ligand, the RXR-RAR heterodimers associate with a multiprotein complex containing transcription corepressors that induce histone deacetylation, chromatin condensation and transcriptional suppression. On ligand binding, the corepressors dissociate from the receptors and associate with the coactivators leading to transcriptional activation. Formation of heterocomplex with histone deacetylases might lead to inhibition of RARE DNA element binding and to transcriptional repression. Transcriptional activation and RARE DNA element binding might be supported by the transcription factor KLF2. RARA plays an essential role in the regulation of retinoic acid-induced germ cell development during spermatogenesis. Has a role in the survival of early spermatocytes at the beginning prophase of meiosis. In Sertoli cells, may promote the survival and development of early meiotic prophase spermatocytes. In concert with RARG, required for skeletal growth, matrix homeostasis and growth plate function. Together with RXRA, positively regulates microRNA-10a expression, thereby inhibiting the GATA6/VCAM1 signaling response to pulsatile shear stress in vascular endothelial cells. In association with HDAC3, HDAC5 and HDAC7 corepressors, plays a role in the repression of microRNA-10a and thereby promotes the inflammatory response. The chain is Retinoic acid receptor alpha (Rara) from Mus musculus (Mouse).